Here is a 545-residue protein sequence, read N- to C-terminus: CTP synthase (545 aa).

The segment at 1 to 265 (MTKYIFITGG…DEIVVKKLSL (265 aa)) is amidoligase domain. Ser-13 contributes to the CTP binding site. Ser-13 provides a ligand contact to UTP. ATP contacts are provided by residues 14–19 (SLGKGI) and Asp-71. Mg(2+)-binding residues include Asp-71 and Glu-139. CTP contacts are provided by residues 146–148 (DIE), 186–191 (KTKPTQ), and Lys-222. Residues 186-191 (KTKPTQ) and Lys-222 each bind UTP. The Glutamine amidotransferase type-1 domain occupies 290–541 (KIAMVGKYTE…VLAARIHHQE (252 aa)). Position 351 (Gly-351) interacts with L-glutamine. The active-site Nucleophile; for glutamine hydrolysis is Cys-378. Residues 379–382 (LGMQ), Glu-402, and Arg-469 contribute to the L-glutamine site. Residues His-514 and Glu-516 contribute to the active site.

It belongs to the CTP synthase family. Homotetramer.

It catalyses the reaction UTP + L-glutamine + ATP + H2O = CTP + L-glutamate + ADP + phosphate + 2 H(+). The catalysed reaction is L-glutamine + H2O = L-glutamate + NH4(+). The enzyme catalyses UTP + NH4(+) + ATP = CTP + ADP + phosphate + 2 H(+). It participates in pyrimidine metabolism; CTP biosynthesis via de novo pathway; CTP from UDP: step 2/2. Its activity is regulated as follows. Allosterically activated by GTP, when glutamine is the substrate; GTP has no effect on the reaction when ammonia is the substrate. The allosteric effector GTP functions by stabilizing the protein conformation that binds the tetrahedral intermediate(s) formed during glutamine hydrolysis. Inhibited by the product CTP, via allosteric rather than competitive inhibition. In terms of biological role, catalyzes the ATP-dependent amination of UTP to CTP with either L-glutamine or ammonia as the source of nitrogen. Regulates intracellular CTP levels through interactions with the four ribonucleotide triphosphates. The chain is CTP synthase from Legionella pneumophila (strain Corby).